The chain runs to 220 residues: Urease accessory protein UreE (220 aa).

The segment at 145-220 (EGGAYSAGGH…QIHKRRPDNL (76 aa)) is disordered. Residues 156–177 (HGHDHGSHEHSAHDHGKHDHAP) show a composition bias toward basic and acidic residues. Low complexity predominate over residues 178–188 (AKPATAATPAA). The segment covering 191 to 206 (HGPDCNHGHDHAHEAK) has biased composition (basic and acidic residues).

Belongs to the UreE family.

The protein localises to the cytoplasm. Involved in urease metallocenter assembly. Binds nickel. Probably functions as a nickel donor during metallocenter assembly. The protein is Urease accessory protein UreE of Polaromonas sp. (strain JS666 / ATCC BAA-500).